A 277-amino-acid polypeptide reads, in one-letter code: Alpha carbonic anhydrase 5 (277 aa).

The N-terminal stretch at 1–22 (MKIPSIGYVFFLIFISITIVSS) is a signal peptide. Positions 33 to 269 (TQFNYEKKGE…KNERPVALYI (237 aa)) constitute an Alpha-carbonic anhydrase domain. Cys58 and Cys219 form a disulfide bridge. Asn91 carries an N-linked (GlcNAc...) asparagine glycan. His99 (proton acceptor) is an active-site residue. The N-linked (GlcNAc...) asparagine glycan is linked to Asn117. 3 residues coordinate Zn(2+): His127, His129, and His146. Substrate is bound at residue 215-216 (TT).

The protein belongs to the alpha-class carbonic anhydrase family. Zn(2+) is required as a cofactor. In terms of processing, N-glycosylated.

Its subcellular location is the plastid. The protein localises to the chloroplast stroma. The enzyme catalyses hydrogencarbonate + H(+) = CO2 + H2O. In terms of biological role, reversible hydration of carbon dioxide. This Arabidopsis thaliana (Mouse-ear cress) protein is Alpha carbonic anhydrase 5 (ACA5).